The sequence spans 1286 residues: 5-oxoprolinase (1286 aa).

Phosphoserine occurs at positions 930 and 1077.

This sequence belongs to the oxoprolinase family. As to quaternary structure, homodimer.

It localises to the cytoplasm. The enzyme catalyses 5-oxo-L-proline + ATP + 2 H2O = L-glutamate + ADP + phosphate + H(+). Functionally, catalyzes the cleavage of 5-oxo-L-proline to form L-glutamate coupled to the hydrolysis of ATP to ADP and inorganic phosphate. This chain is 5-oxoprolinase (OXP1), found in Saccharomyces cerevisiae (strain ATCC 204508 / S288c) (Baker's yeast).